A 150-amino-acid chain; its full sequence is UPF0178 protein Bcep18194_A4809 (150 aa).

The protein belongs to the UPF0178 family.

This is UPF0178 protein Bcep18194_A4809 from Burkholderia lata (strain ATCC 17760 / DSM 23089 / LMG 22485 / NCIMB 9086 / R18194 / 383).